The primary structure comprises 419 residues: Elongation factor Tu, chloroplastic (419 aa).

Positions 10–214 constitute a tr-type G domain; sequence KPHVNIGTIG…AVDSYIPTPK (205 aa). The segment at 19–26 is G1; sequence GHVDHGKT. A GTP-binding site is contributed by 19-26; it reads GHVDHGKT. Thr26 lines the Mg(2+) pocket. The tract at residues 60–64 is G2; that stretch reads GITIN. The segment at 81-84 is G3; it reads DCPG. Residues 81 to 85 and 136 to 139 each bind GTP; these read DCPGH and NKED. Positions 136–139 are G4; it reads NKED. A G5 region spans residues 174 to 176; it reads SAL.

This sequence belongs to the TRAFAC class translation factor GTPase superfamily. Classic translation factor GTPase family. EF-Tu/EF-1A subfamily.

The protein localises to the plastid. It localises to the chloroplast. It carries out the reaction GTP + H2O = GDP + phosphate + H(+). Its function is as follows. GTP hydrolase that promotes the GTP-dependent binding of aminoacyl-tRNA to the A-site of ribosomes during protein biosynthesis. In Chara vulgaris (Common stonewort), this protein is Elongation factor Tu, chloroplastic (tufA).